Here is a 382-residue protein sequence, read N- to C-terminus: tRNA(Ile)-lysidine synthase (382 aa).

50-55 (SGGRDS) contributes to the ATP binding site.

The protein belongs to the tRNA(Ile)-lysidine synthase family.

It is found in the cytoplasm. It catalyses the reaction cytidine(34) in tRNA(Ile2) + L-lysine + ATP = lysidine(34) in tRNA(Ile2) + AMP + diphosphate + H(+). Ligates lysine onto the cytidine present at position 34 of the AUA codon-specific tRNA(Ile) that contains the anticodon CAU, in an ATP-dependent manner. Cytidine is converted to lysidine, thus changing the amino acid specificity of the tRNA from methionine to isoleucine. This chain is tRNA(Ile)-lysidine synthase, found in Bifidobacterium animalis subsp. lactis (strain AD011).